A 641-amino-acid chain; its full sequence is Tetracycline resistance protein TetQ (641 aa).

The tr-type G domain maps to 1-244 (MNIINLGILA…AITSFILPPA (244 aa)). Residues 10-17 (AHIDAGKT), 74-78 (DTPGH), and 128-131 (NKID) contribute to the GTP site.

It belongs to the TRAFAC class translation factor GTPase superfamily. Classic translation factor GTPase family. TetM/TetO subfamily.

Its function is as follows. Abolishes the inhibitory effect of tetracyclin on protein synthesis by a non-covalent modification of the ribosomes. The sequence is that of Tetracycline resistance protein TetQ (tetQ) from Bacteroides thetaiotaomicron.